The sequence spans 298 residues: Pheromone-regulated membrane protein 9 (298 aa).

Residues Met-1–Lys-111 are Cytoplasmic-facing. Residues Ala-112–Asn-132 form a helical membrane-spanning segment. The Extracellular segment spans residues Thr-133–Val-137. A helical membrane pass occupies residues Ala-138–Phe-158. Topologically, residues Ser-159–Phe-298 are cytoplasmic. The interval Ser-235–Phe-262 is disordered. The segment at Phe-297–Phe-298 is COPII binding.

This sequence belongs to the DUP/COS family. As to quaternary structure, interacts with PRM8. Binds to COPII coated vesicles.

It localises to the cell membrane. Its function is as follows. May be involved in endoplasmic reticulum exit trafficking of proteins. The chain is Pheromone-regulated membrane protein 9 (PRM9) from Saccharomyces cerevisiae (strain ATCC 204508 / S288c) (Baker's yeast).